The chain runs to 578 residues: Sulfite reductase [NADPH] hemoprotein beta-component (578 aa).

C441, C447, C487, and C491 together coordinate [4Fe-4S] cluster. C491 is a binding site for siroheme.

This sequence belongs to the nitrite and sulfite reductase 4Fe-4S domain family. Alpha(8)-beta(8). The alpha component is a flavoprotein, the beta component is a hemoprotein. Siroheme serves as cofactor. [4Fe-4S] cluster is required as a cofactor.

It catalyses the reaction hydrogen sulfide + 3 NADP(+) + 3 H2O = sulfite + 3 NADPH + 4 H(+). It functions in the pathway sulfur metabolism; hydrogen sulfide biosynthesis; hydrogen sulfide from sulfite (NADPH route): step 1/1. Functionally, component of the sulfite reductase complex that catalyzes the 6-electron reduction of sulfite to sulfide. This is one of several activities required for the biosynthesis of L-cysteine from sulfate. This chain is Sulfite reductase [NADPH] hemoprotein beta-component, found in Vibrio parahaemolyticus serotype O3:K6 (strain RIMD 2210633).